Consider the following 160-residue polypeptide: Probable chemoreceptor glutamine deamidase CheD 2 (160 aa).

It belongs to the CheD family.

It catalyses the reaction L-glutaminyl-[protein] + H2O = L-glutamyl-[protein] + NH4(+). Functionally, probably deamidates glutamine residues to glutamate on methyl-accepting chemotaxis receptors (MCPs), playing an important role in chemotaxis. The polypeptide is Probable chemoreceptor glutamine deamidase CheD 2 (Geobacter sulfurreducens (strain ATCC 51573 / DSM 12127 / PCA)).